The chain runs to 47 residues: PhoP/PhoQ regulator MgrB (47 aa).

Residues 6–26 form a helical membrane-spanning segment; that stretch reads WAILLAVLVACLLLWMQTLNV.

Belongs to the MgrB family. May form homooligomers. Probably interacts with the periplasmic domain of PhoQ.

It localises to the cell inner membrane. In terms of biological role, phoP-regulated transcription is redox-sensitive, being activated when the periplasm becomes more reducing. MgrB acts between DsbA/DsbB and PhoP/PhoQ in this pathway. Represses PhoP/PhoQ signaling, possibly by binding to the periplasmic domain of PhoQ, altering its activity and that of downstream effector PhoP. This is PhoP/PhoQ regulator MgrB from Cronobacter sakazakii (strain ATCC BAA-894) (Enterobacter sakazakii).